The sequence spans 436 residues: Enolase (436 aa).

Residues His159 and Glu168 each coordinate substrate. Glu211 functions as the Proton donor in the catalytic mechanism. Mg(2+) is bound by residues Asp246, Glu295, and Asp322. Substrate-binding residues include Glu295 and Asp322. The active-site Proton acceptor is the Lys347. Substrate contacts are provided by residues 374 to 377 (SHRS) and Lys398.

This sequence belongs to the enolase family. In terms of assembly, homodimer. It depends on Mg(2+) as a cofactor.

The protein localises to the cytoplasm. It carries out the reaction (2R)-2-phosphoglycerate = phosphoenolpyruvate + H2O. It functions in the pathway carbohydrate degradation; glycolysis; pyruvate from D-glyceraldehyde 3-phosphate: step 4/5. This Neocallimastix frontalis (Rumen fungus) protein is Enolase.